A 168-amino-acid chain; its full sequence is Large ribosomal subunit protein uL10 (168 aa).

The protein belongs to the universal ribosomal protein uL10 family. In terms of assembly, part of the ribosomal stalk of the 50S ribosomal subunit. The N-terminus interacts with L11 and the large rRNA to form the base of the stalk. The C-terminus forms an elongated spine to which L12 dimers bind in a sequential fashion forming a multimeric L10(L12)X complex.

In terms of biological role, forms part of the ribosomal stalk, playing a central role in the interaction of the ribosome with GTP-bound translation factors. The chain is Large ribosomal subunit protein uL10 from Laribacter hongkongensis (strain HLHK9).